Consider the following 1334-residue polypeptide: Aldehyde oxidase 1 (1334 aa).

In terms of domain architecture, 2Fe-2S ferredoxin-type spans 5-92 (PELLFYVNGR…GAAVTTVEGI (88 aa)). The [2Fe-2S] cluster site is built by Cys-44, Cys-49, Cys-52, and Cys-74. Gln-113 contributes to the Mo-molybdopterin binding site. 4 residues coordinate [2Fe-2S] cluster: Cys-114, Cys-117, Cys-149, and Cys-151. Cys-151 contributes to the Mo-molybdopterin binding site. The FAD-binding PCMH-type domain occupies 236–421 (FSGERMMWIS…ASVHIPYSRK (186 aa)). FAD is bound by residues 264–271 (VVMGNTSV), Ala-345, Ser-354, His-358, Asp-367, and Leu-411. Mo-molybdopterin-binding positions include 802–803 (AF) and Met-1043. At Ser-1064 the chain carries Phosphoserine. Residues 1084-1087 (GSVV), Gln-1199, and Leu-1264 each bind Mo-molybdopterin. Catalysis depends on Glu-1266, which acts as the Proton acceptor; for azaheterocycle hydroxylase activity.

It belongs to the xanthine dehydrogenase family. In terms of assembly, homodimer. [2Fe-2S] cluster is required as a cofactor. The cofactor is FAD. Mo-molybdopterin serves as cofactor. Post-translationally, the N-terminus is blocked. In terms of tissue distribution, very high expression in liver and lung. High expression in kidney, pancreas, brain stem and spinal cord. Moderate expression in heart, testis, eye, cerebral cortex and cerebellum. Low expression in stomach and muscle.

It localises to the cytoplasm. The catalysed reaction is an aldehyde + O2 + H2O = a carboxylate + H2O2 + H(+). The enzyme catalyses retinal + O2 + H2O = retinoate + H2O2 + H(+). It catalyses the reaction all-trans-retinal + O2 + H2O = all-trans-retinoate + H2O2 + H(+). Inhibited by hydralazine and menadione. Not inhibited by BOF-4272 or allopurinol, xanthine dehydrogenase potent inhibitors. In contrast to guinea pig, human and rat, isovanillin is not an inhibitor but a substrate for AOX1 in rabbit. In terms of biological role, oxidase with broad substrate specificity, oxidizing aromatic azaheterocycles, such as N1-methylnicotinamide, N-methylphthalazinium and phthalazine, as well as aldehydes, such as benzaldehyde, retinal, pyridoxal, and vanillin. Plays a key role in the metabolism of xenobiotics and drugs containing aromatic azaheterocyclic substituents. Participates in the bioactivation of prodrugs such as famciclovir, catalyzing the oxidation step from 6-deoxypenciclovir to penciclovir, which is a potent antiviral agent. Is probably involved in the regulation of reactive oxygen species homeostasis. May be a prominent source of superoxide generation via the one-electron reduction of molecular oxygen. May also catalyze nitric oxide (NO) production via the reduction of nitrite to NO with NADH or aldehyde as electron donor. May play a role in adipogenesis. Cannot use hypoxanthine and all-trans-retinol as substrate. The chain is Aldehyde oxidase 1 from Oryctolagus cuniculus (Rabbit).